The sequence spans 156 residues: SsrA-binding protein (156 aa).

The protein belongs to the SmpB family.

Its subcellular location is the cytoplasm. Functionally, required for rescue of stalled ribosomes mediated by trans-translation. Binds to transfer-messenger RNA (tmRNA), required for stable association of tmRNA with ribosomes. tmRNA and SmpB together mimic tRNA shape, replacing the anticodon stem-loop with SmpB. tmRNA is encoded by the ssrA gene; the 2 termini fold to resemble tRNA(Ala) and it encodes a 'tag peptide', a short internal open reading frame. During trans-translation Ala-aminoacylated tmRNA acts like a tRNA, entering the A-site of stalled ribosomes, displacing the stalled mRNA. The ribosome then switches to translate the ORF on the tmRNA; the nascent peptide is terminated with the 'tag peptide' encoded by the tmRNA and targeted for degradation. The ribosome is freed to recommence translation, which seems to be the essential function of trans-translation. This chain is SsrA-binding protein, found in Clostridium perfringens (strain 13 / Type A).